A 586-amino-acid chain; its full sequence is MSQMLHIEIPNFGNTVLGCLNEQRLLGLYCDVSIVVKGQAFKAHRAVLAASSLYFRDLFSGNSKSAFELPGTVPPACFQQILSFCYTGKLTMAASEQLVVMYTAGFLQIQHIVERGTDLMFKVSSPHCDSQTAMIEDASSEPQSPCNQLQPATAAYVTSPSVPIPLLTRVKHEAMEMPPASGPGLASKRPLETGPRDGVAVATGAAGTPGTAPLKLPRVSYYGVPSLATLIPSIQQVPYPPGERTSPGASSLPTTDSPTSYHNEEDEEDDEAYDTMVEEQYGQMYIKATGNYAVQEKPEPVPLESRSCVLIRRDLVALPASLISQIGYRCHPKLYSEGDPGEKLELVAGSGVYITRGQLMNCHLCAGVKHKVLLRRLLATFFDRNTLANSCGTGIRSSTSDPSRKPLDSRVLNAVKLYCQNFAPSFKESEMNVIAADMCTNARRVRKRWLPKIKSMLPEGVEMYRSVMGASAASLPLDPEFPSAAPQVFEQRIYAERRSDAATIVALRTDAVNVDLSTSANPAFEANEEVDGGGSVIQEVAAPEQLPADGQSSPQAFEQGNTSSSRPQTPVATATRRPEGTYAGTL.

Positions 30-94 constitute a BTB domain; it reads CDVSIVVKGQ…CYTGKLTMAA (65 aa). Residue Lys-171 forms a Glycyl lysine isopeptide (Lys-Gly) (interchain with G-Cter in SUMO2) linkage. Residues 177–196 form a disordered region; it reads MPPASGPGLASKRPLETGPR. Lys-215 is covalently cross-linked (Glycyl lysine isopeptide (Lys-Gly) (interchain with G-Cter in SUMO2)). The disordered stretch occupies residues 236-272; it reads QVPYPPGERTSPGASSLPTTDSPTSYHNEEDEEDDEA. Residues 247–261 are compositionally biased toward polar residues; it reads PGASSLPTTDSPTSY. Residues Lys-297, Lys-427, and Lys-454 each participate in a glycyl lysine isopeptide (Lys-Gly) (interchain with G-Cter in SUMO2) cross-link. A BEN domain is found at 349-446; sequence GSGVYITRGQ…DMCTNARRVR (98 aa). The segment at 542-586 is disordered; it reads APEQLPADGQSSPQAFEQGNTSSSRPQTPVATATRRPEGTYAGTL. Residues 550 to 572 show a composition bias toward polar residues; the sequence is GQSSPQAFEQGNTSSSRPQTPVA.

Homooligomer; mediated by the BTB domain. Interacts with the NuRD complex. Interacts (via C-terminal part) with HDAC2. Interacts (via BTB domain) with MTA1, MTA2 and MTA3.

It is found in the nucleus. Functions as a transcriptional repressor through its association with the NuRD complex. Recruits the NuRD complex to the promoter of MDM2, leading to the repression of MDM2 transcription and subsequent stability of p53/TP53. This is Nucleus accumbens-associated protein 2 (Nacc2) from Mus musculus (Mouse).